Reading from the N-terminus, the 553-residue chain is Salicylyl-CoA synthase / salicylate adenylyltransferase (553 aa).

Residue glycine 203 participates in ATP binding. 246 to 247 contributes to the substrate binding site; it reads HN. Glycine 320, valine 342, aspartate 426, arginine 441, and lysine 533 together coordinate ATP. Position 533 (lysine 533) interacts with substrate.

It belongs to the ATP-dependent AMP-binding enzyme family.

The enzyme catalyses salicylate + ATP + CoA = 2-hydroxybenzoyl-CoA + AMP + diphosphate. Functionally, involved in the degradation of salicylate via a pathway involving coenzyme A derivative. Catalyzes the conversion of salicylate to salicyloyl-CoA via the formation of a salicylate-adenylate intermediate. The substrate specificity is strong, since benzoate, 3-hydroxybenzoate, 4-hydroxybenzoate, gentisate, 2-aminobenzoate, aminobenzoate, salicylamide, salicylaldoxime and 2-hydroxyphenyl acetate cannot substitute for salicylate. The chain is Salicylyl-CoA synthase / salicylate adenylyltransferase from Streptomyces sp.